The sequence spans 363 residues: Cytochrome c oxidase subunit 2 (363 aa).

Residues 1-23 (MTPRGPGRLQRLSQCRPQRGSGG) are disordered. The first 41 residues, 1–41 (MTPRGPGRLQRLSQCRPQRGSGGPARGLRQLALAAMLGALA), serve as a signal peptide directing secretion. 2 helical membrane-spanning segments follow: residues 71-91 (LWIGAVIASLAVGVIVWGLIF) and 118-138 (LVLTVIPFLIISVLFYFTVVV). Positions 254, 295, 299, and 303 each coordinate Cu cation.

Belongs to the cytochrome c oxidase subunit 2 family. The cofactor is Cu cation. It depends on heme as a cofactor.

Its subcellular location is the cell membrane. The catalysed reaction is 4 Fe(II)-[cytochrome c] + O2 + 8 H(+)(in) = 4 Fe(III)-[cytochrome c] + 2 H2O + 4 H(+)(out). Subunits I and II form the functional core of the enzyme complex. Electrons originating in cytochrome c are transferred via heme a and Cu(A) to the binuclear center formed by heme a3 and Cu(B). This chain is Cytochrome c oxidase subunit 2 (ctaC), found in Mycobacterium bovis (strain ATCC BAA-935 / AF2122/97).